The chain runs to 426 residues: Histidine--tRNA ligase (426 aa).

The protein belongs to the class-II aminoacyl-tRNA synthetase family. As to quaternary structure, homodimer.

It is found in the cytoplasm. It catalyses the reaction tRNA(His) + L-histidine + ATP = L-histidyl-tRNA(His) + AMP + diphosphate + H(+). This Streptococcus equi subsp. equi (strain 4047) protein is Histidine--tRNA ligase.